The primary structure comprises 731 residues: Replication restart protein PriA (731 aa).

The segment at 1 to 98 (MSVAHVALPV…HPIGDVLFHA (98 aa)) is 3'BD. Residues 115-177 (WYWFATEQGQ…RGKGLAELAC (63 aa)) form a WH region. Positions 200-375 (TEQATAVGAI…VRQGKYRQLT (176 aa)) are helicase lobe 1. The region spanning 210 to 376 (HSAADRFSAW…RQGKYRQLTL (167 aa)) is the Helicase ATP-binding domain. 223–230 (GITGSGKT) contacts ATP. 6 residues coordinate ADP: Gly-226, Gly-228, Lys-229, Thr-230, Glu-231, and Arg-263. A DEAH box motif is present at residues 319 to 322 (DEEH). Residues 326 to 340 (YKQQEGWRYHARDLA) carry the Aromatic-rich loop (ARL) motif. The helicase lobe 2, N-terminus stretch occupies residues 387-430 (QQHVLDLKGQPLQAGLSPALISRMRQHLQADNQVILFLNRRGFA). The segment at 431 to 485 (PALLCHDCGWIAECPRCDSYYTLHQAQHHLRCHHCDSQRPIPRQCPSCGSTHLVP) is CRR. The Zn(2+) site is built by Cys-435, Cys-438, Cys-444, Cys-447, Cys-462, Cys-465, Cys-475, and Cys-478. In terms of domain architecture, Helicase C-terminal spans 470-637 (PIPRQCPSCG…QLPPWTSHVL (168 aa)). A helicase lobe 2, C-terminus region spans residues 486–626 (VGIGTEQLEQ…AEQALAERQT (141 aa)). Lys-543 lines the ADP pocket. The CTD stretch occupies residues 633-731 (TSHVLIRAED…WVLDVDPIEG (99 aa)).

Belongs to the helicase family. PriA subfamily. Binds SSB. Component of the replication restart primosome. The cofactor is Zn(2+).

The catalysed reaction is Couples ATP hydrolysis with the unwinding of duplex DNA by translocating in the 3'-5' direction.. It catalyses the reaction ATP + H2O = ADP + phosphate + H(+). With respect to regulation, ATPase activity is stimulated by single-stranded binding protein (SSB). In terms of biological role, initiates the restart of stalled replication forks, which reloads the replicative helicase on sites other than the origin of replication. Recognizes and binds to abandoned replication forks and remodels them to uncover a helicase loading site. Promotes assembly of the primosome at these replication forks. Functionally, recognizes abandoned replication forks and remodels SSB on ssDNA to uncover a loading site for DnaB. Binds replication fork DNA, has DNA-dependent ATPase activity in the presence of replication fork DNA, restores normal cell growth and SOS induction to E.coli mutant pirA304. The polypeptide is Replication restart protein PriA (Klebsiella pneumoniae subsp. pneumoniae (strain ATCC 700721 / MGH 78578)).